The chain runs to 223 residues: Kinetochore protein Spc25 (223 aa).

Residues 51 to 116 (RHQRKVGKLQ…QRKNEIMERI (66 aa)) adopt a coiled-coil conformation.

This sequence belongs to the SPC25 family. In terms of assembly, component of the Ndc80 complex, which is composed of Ndc80, Nuf2 and Spc25.

The protein resides in the nucleus. It localises to the chromosome. Its subcellular location is the centromere. It is found in the kinetochore. Acts as a component of the essential kinetochore-associated Ndc80 complex, which is required for chromosome segregation and spindle checkpoint activity during meiosis and mitosis. Required for kinetochore integrity and the organization of stable microtubule binding sites in the outer plate of the kinetochore. Participates in SAC signaling that responds specifically to disruptions in spindle microtubule dynamics. The NDC80 complex synergistically enhances the affinity of the SKA1 complex for microtubules and may allow the NDC80 complex to track depolymerizing microtubules. The polypeptide is Kinetochore protein Spc25 (Drosophila yakuba (Fruit fly)).